The chain runs to 33 residues: Protamine-1A (33 aa).

The tract at residues 1–33 (PRRRRSSSRPVRRRRRPRRVSRRRRRRGGRRRR) is disordered.

As to expression, testis.

Its subcellular location is the nucleus. The protein resides in the chromosome. Its function is as follows. Protamines substitute for histones in the chromatin of sperm during the haploid phase of spermatogenesis. They compact sperm DNA into a highly condensed, stable and inactive complex. In Oncorhynchus mykiss (Rainbow trout), this protein is Protamine-1A.